Here is a 419-residue protein sequence, read N- to C-terminus: Protein arginine N-methyltransferase 8-B (419 aa).

Positions methionine 1–arginine 14 are enriched in basic residues. The segment at methionine 1–alanine 79 is disordered. Residue glycine 2 is the site of N-myristoyl glycine attachment. Residues glutamine 33–histidine 63 show a composition bias toward low complexity. The residue at position 83 (arginine 83) is an Omega-N-methylarginine. Residue arginine 98 is modified to Asymmetric dimethylarginine. One can recognise an SAM-dependent MTase PRMT-type domain in the interval arginine 98–aspartate 402. Residues histidine 111, arginine 120, glycine 144, glycine 144–threonine 147, glutamate 166, and glutamate 195 each bind S-adenosyl-L-methionine. Residues glutamate 210 and glutamate 219 contribute to the active site.

The protein belongs to the class I-like SAM-binding methyltransferase superfamily. Protein arginine N-methyltransferase family. PRMT8 subfamily. In terms of assembly, homodimer. Tetramer; individual homodimers associates to form a homotetramer. Homooctamer; individual homodimers associates to form a homooctamer and homooligomerization is required for proper localization to the cell membrane.

The protein resides in the cell membrane. It carries out the reaction L-arginyl-[protein] + S-adenosyl-L-methionine = N(omega)-methyl-L-arginyl-[protein] + S-adenosyl-L-homocysteine + H(+). It catalyses the reaction L-arginyl-[protein] + 2 S-adenosyl-L-methionine = N(omega),N(omega)-dimethyl-L-arginyl-[protein] + 2 S-adenosyl-L-homocysteine + 2 H(+). In terms of biological role, S-adenosyl-L-methionine-dependent and membrane-associated arginine methyltransferase that can both catalyze the formation of omega-N monomethylarginine (MMA) and asymmetrical dimethylarginine (aDMA). The protein is Protein arginine N-methyltransferase 8-B (prmt8b) of Danio rerio (Zebrafish).